The primary structure comprises 510 residues: GMP synthase [glutamine-hydrolyzing] (510 aa).

The region spanning 5–195 (TVVVLDFGGQ…LFEICGLRGD (191 aa)) is the Glutamine amidotransferase type-1 domain. The active-site Nucleophile is Cys-82. Catalysis depends on residues His-169 and Glu-171. Residues 196–385 (WDLSDFISEA…LGIPAEILWR (190 aa)) enclose the GMPS ATP-PPase domain. 223–229 (SGGVDSS) contributes to the ATP binding site.

Homodimer.

The enzyme catalyses XMP + L-glutamine + ATP + H2O = GMP + L-glutamate + AMP + diphosphate + 2 H(+). The protein operates within purine metabolism; GMP biosynthesis; GMP from XMP (L-Gln route): step 1/1. Functionally, catalyzes the synthesis of GMP from XMP. The sequence is that of GMP synthase [glutamine-hydrolyzing] from Syntrophomonas wolfei subsp. wolfei (strain DSM 2245B / Goettingen).